The chain runs to 88 residues: Acylphosphatase (88 aa).

Residues 3–88 enclose the Acylphosphatase-like domain; the sequence is AVDVLISGRV…RAGHQGFEVR (86 aa). Active-site residues include arginine 18 and asparagine 36.

This sequence belongs to the acylphosphatase family.

It carries out the reaction an acyl phosphate + H2O = a carboxylate + phosphate + H(+). This Methanocella arvoryzae (strain DSM 22066 / NBRC 105507 / MRE50) protein is Acylphosphatase (acyP).